A 367-amino-acid chain; its full sequence is Probable butyrate kinase (367 aa).

It belongs to the acetokinase family.

It localises to the cytoplasm. The catalysed reaction is butanoate + ATP = butanoyl phosphate + ADP. The sequence is that of Probable butyrate kinase from Bacillus cereus (strain G9842).